Here is a 78-residue protein sequence, read N- to C-terminus: MSDIEQRVKQAVAEQLGIKAEEIKNEASFMDDLGADSLDLVELVMSFENDFDITIPDEDSNEITTVQSAIDYVTKKLG.

In terms of domain architecture, Carrier spans 2 to 77 (SDIEQRVKQA…SAIDYVTKKL (76 aa)). O-(pantetheine 4'-phosphoryl)serine is present on Ser37.

The protein belongs to the acyl carrier protein (ACP) family. 4'-phosphopantetheine is transferred from CoA to a specific serine of apo-ACP by AcpS. This modification is essential for activity because fatty acids are bound in thioester linkage to the sulfhydryl of the prosthetic group.

It is found in the cytoplasm. It functions in the pathway lipid metabolism; fatty acid biosynthesis. In terms of biological role, carrier of the growing fatty acid chain in fatty acid biosynthesis. In Acinetobacter baylyi (strain ATCC 33305 / BD413 / ADP1), this protein is Acyl carrier protein.